The primary structure comprises 260 residues: Putative ABC transporter ATP-binding protein PH0132 (260 aa).

Positions 2–234 constitute an ABC transporter domain; sequence IEFRDVWFWY…DLEGFGLKEP (233 aa). 34 to 41 is a binding site for ATP; it reads GPNGSGKT.

The protein belongs to the ABC transporter superfamily.

The protein resides in the cell membrane. Probably part of an ABC transporter complex. Responsible for energy coupling to the transport system. In Pyrococcus horikoshii (strain ATCC 700860 / DSM 12428 / JCM 9974 / NBRC 100139 / OT-3), this protein is Putative ABC transporter ATP-binding protein PH0132.